Here is a 229-residue protein sequence, read N- to C-terminus: tRNA (guanine-N(7)-)-methyltransferase (229 aa).

The S-adenosyl-L-methionine site is built by Glu-62, Glu-87, Asp-114, and Asp-137. Asp-137 is a catalytic residue. Residue Lys-141 participates in substrate binding. The segment at 143–148 (KHNKRR) is interaction with RNA. Substrate is bound by residues Asp-173 and 208–211 (TKFE).

Belongs to the class I-like SAM-binding methyltransferase superfamily. TrmB family.

It carries out the reaction guanosine(46) in tRNA + S-adenosyl-L-methionine = N(7)-methylguanosine(46) in tRNA + S-adenosyl-L-homocysteine. Its pathway is tRNA modification; N(7)-methylguanine-tRNA biosynthesis. In terms of biological role, catalyzes the formation of N(7)-methylguanine at position 46 (m7G46) in tRNA. This is tRNA (guanine-N(7)-)-methyltransferase from Francisella philomiragia subsp. philomiragia (strain ATCC 25017 / CCUG 19701 / FSC 153 / O#319-036).